The following is a 198-amino-acid chain: Guanylate kinase (198 aa).

Residues 6–192 (KSIVIFTGPS…AAQEIREILH (187 aa)) enclose the Guanylate kinase-like domain. ATP is bound at residue 13–20 (GPSGVGKG).

Belongs to the guanylate kinase family.

Its subcellular location is the cytoplasm. The catalysed reaction is GMP + ATP = GDP + ADP. Functionally, essential for recycling GMP and indirectly, cGMP. The protein is Guanylate kinase of Mycoplasmopsis synoviae (strain 53) (Mycoplasma synoviae).